We begin with the raw amino-acid sequence, 140 residues long: Large ribosomal subunit protein uL11 (140 aa).

The protein belongs to the universal ribosomal protein uL11 family. In terms of assembly, part of the ribosomal stalk of the 50S ribosomal subunit. Interacts with L10 and the large rRNA to form the base of the stalk. L10 forms an elongated spine to which L12 dimers bind in a sequential fashion forming a multimeric L10(L12)X complex. In terms of processing, one or more lysine residues are methylated.

In terms of biological role, forms part of the ribosomal stalk which helps the ribosome interact with GTP-bound translation factors. This Lawsonia intracellularis (strain PHE/MN1-00) protein is Large ribosomal subunit protein uL11.